A 490-amino-acid chain; its full sequence is MEAPDYEVLSVREQLFHERIRECIISTLLFATLYILCHIFLTRFKKPAEFTTVDDEDATVNKIALELCTFTLAIALGAVLLLPFSIISNEVLLSLPRNYYIQWLNGSLIHGLWNLVFLFSNLSLIFLMPFAYFFTESEGFAGSRRGVLGRVYETVVMLMLLTLLVLGMVWVASAILDNNKASRESLYDFWEYYLPYLYSCISFLGVLLLLVCTPLGLARMFSVTGKLLVKPRLLEDLEEQLYCSAFEEAAPTRRICNPTSCWLPLDMELLHRQVLALQTQRVLLEKRRKASAWQRNLGYPLAMLCLLVLTGLSVLIVAIHILELLIDEAAMPRGMQDASLGQVSFSRLGSFGAVIQVALIFYLMVSSVVGFYSSPLFRSLRPRWHDTAMTQIIGNCVCLLVLSSALPVFSRTLGLTRFDLLGDFGRFNWLGNFYIVFLYNAAFAGLTTLCLVKTFTAAVRAELIRAFGLDRLPLPVSGFPPRASRKTQHQ.

The Extracellular segment spans residues 1–21 (MEAPDYEVLSVREQLFHERIR). An interaction with LGB region spans residues 1–59 (MEAPDYEVLSVREQLFHERIRECIISTLLFATLYILCHIFLTRFKKPAEFTTVDDEDAT). The segment at 1-76 (MEAPDYEVLS…LCTFTLAIAL (76 aa)) is LCN1-binding. A helical membrane pass occupies residues 22–42 (ECIISTLLFATLYILCHIFLT). Residues 43–66 (RFKKPAEFTTVDDEDATVNKIALE) are Cytoplasmic-facing. The chain crosses the membrane as a helical span at residues 67 to 87 (LCTFTLAIALGAVLLLPFSII). The Extracellular segment spans residues 88–114 (SNEVLLSLPRNYYIQWLNGSLIHGLWN). A helical transmembrane segment spans residues 115-135 (LVFLFSNLSLIFLMPFAYFFT). The Cytoplasmic portion of the chain corresponds to 136 to 154 (ESEGFAGSRRGVLGRVYET). A helical membrane pass occupies residues 155-175 (VVMLMLLTLLVLGMVWVASAI). Over 176–196 (LDNNKASRESLYDFWEYYLPY) the chain is Extracellular. The chain crosses the membrane as a helical span at residues 197-217 (LYSCISFLGVLLLLVCTPLGL). Over 218-305 (ARMFSVTGKL…NLGYPLAMLC (88 aa)) the chain is Cytoplasmic. A helical membrane pass occupies residues 306–326 (LLVLTGLSVLIVAIHILELLI). Over 327–350 (DEAAMPRGMQDASLGQVSFSRLGS) the chain is Extracellular. Residues 351-371 (FGAVIQVALIFYLMVSSVVGF) form a helical membrane-spanning segment. Residues 372–388 (YSSPLFRSLRPRWHDTA) are Cytoplasmic-facing. Residues 389–409 (MTQIIGNCVCLLVLSSALPVF) form a helical membrane-spanning segment. Residues 410–431 (SRTLGLTRFDLLGDFGRFNWLG) are Extracellular-facing. Residues 432-452 (NFYIVFLYNAAFAGLTTLCLV) traverse the membrane as a helical segment. Residues 453-490 (KTFTAAVRAELIRAFGLDRLPLPVSGFPPRASRKTQHQ) are Cytoplasmic-facing.

It belongs to the LIMR family. As to quaternary structure, dimer. Can also form higher oligomers. Interacts with LCN1; this interaction mediates the endocytosis of LCN1. Interacts with UBAC2, FAF2, VCP, AMFR, ZNRF3, CTNNB1, LRP6, GSK3A, GSK3B, FZD6, DVL2 and RNF43. Interaction with LGB and SCGB1A1 is controversial.

It is found in the cell membrane. Its subcellular location is the endoplasmic reticulum membrane. In terms of biological role, plays an essential role in lymphocyte development by negatively regulating the canonical Wnt signaling pathway. In association with UBAC2 and E3 ubiquitin-protein ligase AMFR, promotes the ubiquitin-mediated degradation of CTNNB1 and Wnt receptors FZD6 and LRP6. LMBR1L stabilizes the beta-catenin destruction complex that is required for regulating CTNNB1 levels. Acts as a LCN1 receptor and can mediate its endocytosis. In Pongo abelii (Sumatran orangutan), this protein is Protein LMBR1L (LMBR1L).